We begin with the raw amino-acid sequence, 161 residues long: Cyclic pyranopterin monophosphate synthase (161 aa).

Residues 75 to 77 (LCH) and 113 to 114 (ME) contribute to the substrate site. The active site involves Asp128.

The protein belongs to the MoaC family. As to quaternary structure, homohexamer; trimer of dimers.

It catalyses the reaction (8S)-3',8-cyclo-7,8-dihydroguanosine 5'-triphosphate = cyclic pyranopterin phosphate + diphosphate. It functions in the pathway cofactor biosynthesis; molybdopterin biosynthesis. Its function is as follows. Catalyzes the conversion of (8S)-3',8-cyclo-7,8-dihydroguanosine 5'-triphosphate to cyclic pyranopterin monophosphate (cPMP). In Thioalkalivibrio sulfidiphilus (strain HL-EbGR7), this protein is Cyclic pyranopterin monophosphate synthase.